We begin with the raw amino-acid sequence, 259 residues long: Small ribosomal subunit protein eS1 (259 aa).

Position 2 is an N-acetylalanine; partial (Ala2).

The protein belongs to the eukaryotic ribosomal protein eS1 family. As to quaternary structure, component of the small ribosomal subunit. Mature ribosomes consist of a small (40S) and a large (60S) subunit. The 40S subunit contains about 33 different proteins and 1 molecule of RNA (18S). The 60S subunit contains about 49 different proteins and 3 molecules of RNA (25S, 5.8S and 5S).

Its subcellular location is the cytoplasm. In Cryptococcus neoformans var. neoformans serotype D (strain B-3501A) (Filobasidiella neoformans), this protein is Small ribosomal subunit protein eS1.